The chain runs to 664 residues: SPARC-like protein 1 (664 aa).

Residues 1–16 form the signal peptide; sequence MKTGLFFLCLLGTAAA. An O-glycosylated at one additional site region spans residues 25 to 34; sequence SDHSKPTAET. Residues 28–360 are disordered; it reads SKPTAETVAP…DGPRHSASDD (333 aa). O-linked (GalNAc...) threonine glycosylation is found at Thr-31 and Thr-40. A glycan (O-linked (GalNAc...) serine) is linked at Ser-44. The segment covering 62–84 has biased composition (basic and acidic residues); it reads DDSHHKAEKSSVLKSKEESHEQS. Phosphoserine occurs at positions 76, 84, and 92. A compositionally biased stretch (polar residues) spans 85–94; the sequence is AEQGKSSSQE. Positions 96–105 are enriched in basic and acidic residues; that stretch reads GLKDQEDSDG. An O-linked (GalNAc...) threonine glycan is attached at Thr-116. The span at 120–136 shows a compositional bias: basic and acidic residues; it reads LDIKEDMSEPQEKKLSE. The span at 146–156 shows a compositional bias: polar residues; that stretch reads SSFTDSNQQES. Asn-169 is a glycosylation site (N-linked (GlcNAc...) asparagine). Residues 170–180 are compositionally biased toward basic residues; it reads YSHHQLNRSSK. A Phosphoserine modification is found at Ser-171. N-linked (GlcNAc...) asparagine glycans are attached at residues Asn-176 and Asn-196. Polar residues predominate over residues 188-199; that stretch reads QGNQEQDPNISN. Over residues 216–235 the composition is skewed to basic and acidic residues; the sequence is DNQERKTELPREHANSKQEE. Acidic residues-rich tracts occupy residues 236-248 and 259-280; these read DNTQ…EESD and DEFD…EEEN. Residue Ser-272 is modified to Phosphoserine. Asn-280 carries an N-linked (GlcNAc...) asparagine glycan. Positions 306-316 are enriched in basic and acidic residues; the sequence is SNHKETEEKTV. Residue Thr-331 is glycosylated (O-linked (GalNAc...) threonine). The segment covering 339 to 349 has biased composition (acidic residues); the sequence is DDGDDDGDDGG. Ser-358 and Ser-365 each carry phosphoserine. Residues 388 to 426 form a disordered region; sequence EKVHENENIGTTEPGEHQEAKKAENSSNEEETSSEGNMR. O-linked (GalNAc...) threonine glycosylation is present at Thr-398. Residues 401–411 show a composition bias toward basic and acidic residues; sequence PGEHQEAKKAE. Asn-412 carries N-linked (GlcNAc...) asparagine glycosylation. The residue at position 420 (Ser-420) is a Phosphoserine. The 23-residue stretch at 432 to 454 folds into the Follistatin-like domain; it reads SCMSFQCKRGHICKADQQGKPHC. 7 cysteine pairs are disulfide-bonded: Cys-433–Cys-444, Cys-438–Cys-454, Cys-456–Cys-490, Cys-462–Cys-483, Cys-472–Cys-509, Cys-515–Cys-626, and Cys-634–Cys-650. A Kazal-like domain is found at 450 to 511; sequence GKPHCVCQDP…QLDYFGACKS (62 aa). An N-linked (GlcNAc...) asparagine glycan is attached at Asn-476. The region spanning 622–657 is the EF-hand domain; sequence PMEHCITRFFEECDPNKDKHITLKEWGHCFGIKEED. The Ca(2+) site is built by Asp-635, Asn-637, Asp-639, His-641, and Glu-646.

This sequence belongs to the SPARC family. In terms of processing, N- and O-glycosylated. O-glycosylated with a core 1 or possibly core 8 glycan. Highly expressed in lymph node, brain, heart, lung, skeletal muscle, ovary, small intestine, and colon, with lower levels in placenta, pancreas, testis, spleen, and thymus, and no expression in kidney, liver, and peripheral blood leukocytes.

It localises to the secreted. Its subcellular location is the extracellular space. The protein resides in the extracellular matrix. This Homo sapiens (Human) protein is SPARC-like protein 1 (SPARCL1).